The following is a 298-amino-acid chain: MKPDIIKKRRPLPSDDEDEYNEEDEMYEDDNNNYEEDEDDDDDDDEDDEDDDENEEELIKQQLSNVSFSSLLKYKKNGPTDKLNLNTITKNLQQQKSFKKEEQQEKEEMNSKNKYKIKRESSDAPVEMTAMKPVSRFRQVVVNKTKMNVRDPRFDSLSGGKYNEDLYRKRYGFLDDVIKRDVERMESTWKQMDDCRERDQLYKKIQSKKSQLKTQQLKDQKRETKNKLWSNEIESVKKGKTPYHISNKTVKQFELQEKFKQLKASNKLDKFMETKRKRISSKEKTFLPQRRSFDQDEN.

Positions 1-131 (MKPDIIKKRR…SDAPVEMTAM (131 aa)) are disordered. The segment covering 14–56 (SDDEDEYNEEDEMYEDDNNNYEEDEDDDDDDDEDDEDDDENEE) has biased composition (acidic residues). Composition is skewed to polar residues over residues 61–70 (QQLSNVSFSS) and 83–92 (LNLNTITKNL). Coiled coils occupy residues 88-112 (ITKN…MNSK) and 196-228 (RERD…KNKL). The span at 98–111 (FKKEEQQEKEEMNS) shows a compositional bias: basic and acidic residues. Residues 279–298 (ISSKEKTFLPQRRSFDQDEN) form a disordered region.

Belongs to the RRP36 family.

The protein resides in the nucleus. Its subcellular location is the nucleolus. Its function is as follows. Involved in the early processing steps of the pre-rRNA in the maturation pathway leading to the 18S rRNA. The sequence is that of Ribosomal RNA processing protein 36 homolog from Dictyostelium discoideum (Social amoeba).